The sequence spans 489 residues: Rhamnulokinase (489 aa).

13–17 (ASSGR) is a binding site for ATP. An intrachain disulfide couples Cys-68 to Cys-222. Substrate is bound by residues Gly-83 and 236-238 (HDT). Asp-237 (proton acceptor) is an active-site residue. Thr-259 is a binding site for ATP. Position 296 (Asn-296) interacts with substrate. Gln-304 serves as a coordination point for ATP. Cys-353 and Cys-370 form a disulfide bridge. Gly-402 is a binding site for ATP. The cysteines at positions 413 and 417 are disulfide-linked.

This sequence belongs to the rhamnulokinase family. Requires Mg(2+) as cofactor.

The catalysed reaction is L-rhamnulose + ATP = L-rhamnulose 1-phosphate + ADP + H(+). It participates in carbohydrate degradation; L-rhamnose degradation; glycerone phosphate from L-rhamnose: step 2/3. Its function is as follows. Involved in the catabolism of L-rhamnose (6-deoxy-L-mannose). Catalyzes the transfer of the gamma-phosphate group from ATP to the 1-hydroxyl group of L-rhamnulose to yield L-rhamnulose 1-phosphate. The sequence is that of Rhamnulokinase from Shigella flexneri serotype 5b (strain 8401).